A 224-amino-acid polypeptide reads, in one-letter code: Cytochrome c oxidase subunit 2 (224 aa).

The Mitochondrial intermembrane portion of the chain corresponds to 1 to 26 (MSTWGQINLMDPASPIQMEMMLFHDH). Residues 27–48 (AMAILIGIFTLVSLLGVKLCFN) form a helical membrane-spanning segment. At 49 to 62 (TLSTRTMHEAQLLE) the chain is on the mitochondrial matrix side. Residues 63–82 (TLWTILPAFLLVWLALPSLR) form a helical membrane-spanning segment. The Mitochondrial intermembrane portion of the chain corresponds to 83–224 (LLYLLDEQGS…DVKDFIKMCN (142 aa)). The Cu cation site is built by H161, C196, E198, C200, H204, and M207. E198 serves as a coordination point for Mg(2+).

This sequence belongs to the cytochrome c oxidase subunit 2 family. Component of the cytochrome c oxidase (complex IV, CIV), a multisubunit enzyme composed of a catalytic core of 3 subunits and several supernumerary subunits. The complex exists as a monomer or a dimer and forms supercomplexes (SCs) in the inner mitochondrial membrane with ubiquinol-cytochrome c oxidoreductase (cytochrome b-c1 complex, complex III, CIII). The cofactor is Cu cation.

It localises to the mitochondrion inner membrane. The catalysed reaction is 4 Fe(II)-[cytochrome c] + O2 + 8 H(+)(in) = 4 Fe(III)-[cytochrome c] + 2 H2O + 4 H(+)(out). Its function is as follows. Component of the cytochrome c oxidase, the last enzyme in the mitochondrial electron transport chain which drives oxidative phosphorylation. The respiratory chain contains 3 multisubunit complexes succinate dehydrogenase (complex II, CII), ubiquinol-cytochrome c oxidoreductase (cytochrome b-c1 complex, complex III, CIII) and cytochrome c oxidase (complex IV, CIV), that cooperate to transfer electrons derived from NADH and succinate to molecular oxygen, creating an electrochemical gradient over the inner membrane that drives transmembrane transport and the ATP synthase. Cytochrome c oxidase is the component of the respiratory chain that catalyzes the reduction of oxygen to water. Electrons originating from reduced cytochrome c in the intermembrane space (IMS) are transferred via the dinuclear copper A center (CU(A)) of subunit 2 and heme A of subunit 1 to the active site in subunit 1, a binuclear center (BNC) formed by heme A3 and copper B (CU(B)). The BNC reduces molecular oxygen to 2 water molecules using 4 electrons from cytochrome c in the IMS and 4 protons from the mitochondrial matrix. The polypeptide is Cytochrome c oxidase subunit 2 (COII) (Albinaria caerulea (Land snail)).